The following is a 228-amino-acid chain: 7-cyano-7-deazaguanine synthase (228 aa).

9–19 (LSGGPDSTTVL) serves as a coordination point for ATP. Positions 193, 203, 206, and 209 each coordinate Zn(2+).

This sequence belongs to the QueC family. Zn(2+) serves as cofactor.

The catalysed reaction is 7-carboxy-7-deazaguanine + NH4(+) + ATP = 7-cyano-7-deazaguanine + ADP + phosphate + H2O + H(+). It participates in purine metabolism; 7-cyano-7-deazaguanine biosynthesis. Catalyzes the ATP-dependent conversion of 7-carboxy-7-deazaguanine (CDG) to 7-cyano-7-deazaguanine (preQ(0)). This Rickettsia rickettsii (strain Iowa) protein is 7-cyano-7-deazaguanine synthase.